The following is a 606-amino-acid chain: Preterminal protein (606 aa).

Positions 320–329 match the Nuclear localization signal motif; sequence RLPVRRRRRR. S515 is subject to O-(5'-phospho-DNA)-serine. The tract at residues 573 to 606 is disordered; it reads HLPLPERQADIPLPPLPAGPEPPLPPGARPRRRF. The span at 584 to 600 shows a compositional bias: pro residues; that stretch reads PLPPLPAGPEPPLPPGA.

The protein belongs to the adenoviridae terminal protein family. As to quaternary structure, heterodimer with the polymerase; this heterodimer binds to bp 9 to 18 of the genome. Interacts with host POU2F1; POU2F1 binds to the auxiliary sequences in the inverted terminal repeats and tethers the pTP-POL heterodimer to the origin DNA thereby participating in the assembly of the pre-initiation complex (POL-TP-DBP-NFIA-POU2F1). In terms of processing, preterminal protein is used to replicate viral genome, upon genomic encapsidation it is processed first into iTP and finally into TP by adenovirus protease.

The protein localises to the host nucleus matrix. Functionally, protein covalently bound to the viral DNA that acts as a primer for viral genomic replication by DNA strand displacement. Assembles on the viral origin of replication in an initiation complex with viral polymerase, DBP, host NFIA and host POU2F1/OCT1. During initiation, the polymerase covalently couples the first dCTP with Ser-580 of pTP. The terminal protein stimulates the template activity over 20 fold compared to protein-free templates. Neo-synthesized viral genomes are linked to two preterminal proteins, one for each 5' end. These new genomes are encapsidated in the nucleus, and during capsid maturation by viral protease, preterminal protein is first cleaved into intermediary (iTP), then into mature TP. May play a role in host nuclear matrix localization of genomic DNA. The sequence is that of Preterminal protein from Human adenovirus A serotype 12 (HAdV-12).